Reading from the N-terminus, the 252-residue chain is TVP38/TMEM64 family membrane protein Mb1528c (252 aa).

6 consecutive transmembrane segments (helical) span residues 32-52 (IVGT…VPVP), 64-84 (LGAW…VPPF), 88-108 (AFTL…IAVV), 149-169 (WLAI…INYA), 177-197 (ILSF…AVVI), and 209-229 (LLIL…VYEI).

The protein belongs to the TVP38/TMEM64 family.

The protein resides in the cell membrane. In Mycobacterium bovis (strain ATCC BAA-935 / AF2122/97), this protein is TVP38/TMEM64 family membrane protein Mb1528c.